Here is a 449-residue protein sequence, read N- to C-terminus: Cyclin-B1-5 (449 aa).

Disordered stretches follow at residues 1–37 (MATRHQRAAAAPQPANRGAAVAAGKQKAAATAAAGRP) and 98–147 (PARK…GGSA). Low complexity-rich tracts occupy residues 8-37 (AAAAPQPANRGAAVAAGKQKAAATAAAGRP) and 136-147 (SEGAGSSSGGSA).

The protein belongs to the cyclin family. Cyclin AB subfamily.

The protein is Cyclin-B1-5 (CYCB1-5) of Oryza sativa subsp. japonica (Rice).